The chain runs to 817 residues: Putative ATP-dependent RNA helicase R350 (817 aa).

The disordered stretch occupies residues 1-29 (MNRRNRSNDLNPEPSIENPNNQIAEEFPG). Residues 17-29 (ENPNNQIAEEFPG) show a composition bias toward polar residues. One can recognise a Helicase ATP-binding domain in the interval 93-271 (LNPQGPYTSI…ALMFNLLRPG (179 aa)). 106–113 (HGLGSGKT) serves as a coordination point for ATP. A DEAH box motif is present at residues 206–209 (DEAH). The region spanning 495–661 (LAIAFMTYIS…STDEYVEDQA (167 aa)) is the Helicase C-terminal domain.

It belongs to the DEAD box helicase family. DEAH subfamily.

The protein localises to the virion. The catalysed reaction is ATP + H2O = ADP + phosphate + H(+). The polypeptide is Putative ATP-dependent RNA helicase R350 (Acanthamoeba polyphaga mimivirus (APMV)).